Here is a 169-residue protein sequence, read N- to C-terminus: Allophycocyanin subunit beta-18 (169 aa).

At N72 the chain carries N4-methylasparagine. Position 82 (C82) interacts with (2R,3E)-phycocyanobilin.

It belongs to the phycobiliprotein family. In terms of assembly, heterodimer of an alpha and a beta chain. Post-translationally, contains one covalently linked phycocyanobilin chromophore.

The protein localises to the plastid. It is found in the cyanelle thylakoid membrane. Its function is as follows. Light-harvesting photosynthetic bile pigment-protein from the phycobiliprotein complex. Allophycocyanin has a maximum absorption at approximately 650 nanometers. The chain is Allophycocyanin subunit beta-18 (apcF) from Cyanophora paradoxa.